We begin with the raw amino-acid sequence, 187 residues long: Oleosin Zm-II (187 aa).

Ala2 is subject to N-acetylalanine. Positions 2–51 (ADRDRSGIYGGAHATYGQQQQQGGGGRPMGEQVKKGMLHDKGPTASQALT) are polar. The interval 17–42 (YGQQQQQGGGGRPMGEQVKKGMLHDK) is disordered. A compositionally biased stretch (basic and acidic residues) spans 33–42 (QVKKGMLHDK). 3 helical membrane-spanning segments follow: residues 50-70 (LTVATLFPLGGLLLVLSGLAL), 83-103 (VFLIFSPVLVPAALLIGTAVM), and 104-124 (GFLTSGALGLGGLSSLTCLAN). A hydrophobic region spans residues 52 to 123 (VATLFPLGGL…GGLSSLTCLA (72 aa)). Over residues 155-169 (TAQAGQAIQGRAQEA) the composition is skewed to low complexity. Residues 155 to 187 (TAQAGQAIQGRAQEAGTGGGAGAGAGGGGRASS) are disordered. Residues 170–187 (GTGGGAGAGAGGGGRASS) show a composition bias toward gly residues.

This sequence belongs to the oleosin family. Post-translationally, the N-terminus is blocked. As to expression, found in embryonic axis, scutellum, and aleurone layer.

The protein localises to the lipid droplet. It localises to the membrane. In terms of biological role, may have a structural role to stabilize the lipid body during desiccation of the seed by preventing coalescence of the oil. Probably interacts with both lipid and phospholipid moieties of lipid bodies. May also provide recognition signals for specific lipase anchorage in lipolysis during seedling growth. In Zea mays (Maize), this protein is Oleosin Zm-II (OLE18).